Reading from the N-terminus, the 78-residue chain is TP53-regulated inhibitor of apoptosis 1 (78 aa).

A coiled-coil region spans residues 1–52; the sequence is MNSVGEECTDMKREYDQCFNRWFAEKFLKGECSGDPCTELFRRYRDCVQKAI. The CHCH domain occupies 5 to 55; it reads GEECTDMKREYDQCFNRWFAEKFLKGECSGDPCTELFRRYRDCVQKAIKDK. 2 consecutive short sequence motifs (cx9C motif) follow at residues 8-18 and 37-47; these read CTDMKREYDQC and CTELFRRYRDC. Cystine bridges form between Cys-8–Cys-47 and Cys-18–Cys-37.

Belongs to the TRIAP1/MDM35 family. Monomer. Forms a complex with prelid1 in the mitochondrion intermembrane space. Interacts with prelid3a. In terms of tissue distribution, expressed in the developing pronephros.

The protein localises to the mitochondrion. Its subcellular location is the mitochondrion intermembrane space. It catalyses the reaction a 1,2-diacyl-sn-glycero-3-phosphate(in) = a 1,2-diacyl-sn-glycero-3-phosphate(out). Involved in the modulation of the mitochondrial apoptotic pathway by ensuring the accumulation of cardiolipin (CL) in mitochondrial membranes. The triap1:prelid1 complex probably functions as a phosphatidic acid (PA) transporter across the mitochondrion intermembrane space to provide PA for cardiolipin CL synthesis in the inner membrane. Likewise, the triap1:prelid3a complex mediates the transfer of phosphatidic acid (PA) between liposomes (in vitro) and probably functions as a PA transporter across the mitochondrion intermembrane space (in vivo). Mediates cell survival by inhibiting activation of caspase-9 which prevents induction of apoptosis. Required for pronephros development; probably involved at an early stage in the formation of pronephric components derived from the somatic layer. The polypeptide is TP53-regulated inhibitor of apoptosis 1 (Xenopus tropicalis (Western clawed frog)).